The chain runs to 140 residues: Putative pre-16S rRNA nuclease (140 aa).

It belongs to the YqgF nuclease family.

The protein localises to the cytoplasm. Functionally, could be a nuclease involved in processing of the 5'-end of pre-16S rRNA. This Aeromonas salmonicida (strain A449) protein is Putative pre-16S rRNA nuclease.